We begin with the raw amino-acid sequence, 185 residues long: Adenine phosphoribosyltransferase (185 aa).

This sequence belongs to the purine/pyrimidine phosphoribosyltransferase family. As to quaternary structure, homodimer.

The protein resides in the cytoplasm. The catalysed reaction is AMP + diphosphate = 5-phospho-alpha-D-ribose 1-diphosphate + adenine. It participates in purine metabolism; AMP biosynthesis via salvage pathway; AMP from adenine: step 1/1. In terms of biological role, catalyzes a salvage reaction resulting in the formation of AMP, that is energically less costly than de novo synthesis. The chain is Adenine phosphoribosyltransferase from Pectobacterium carotovorum subsp. carotovorum (strain PC1).